A 493-amino-acid polypeptide reads, in one-letter code: Lysine--tRNA ligase (493 aa).

Mg(2+)-binding residues include Glu404 and Glu411.

Belongs to the class-II aminoacyl-tRNA synthetase family. In terms of assembly, homodimer. Requires Mg(2+) as cofactor.

The protein resides in the cytoplasm. It catalyses the reaction tRNA(Lys) + L-lysine + ATP = L-lysyl-tRNA(Lys) + AMP + diphosphate. The protein is Lysine--tRNA ligase of Oceanobacillus iheyensis (strain DSM 14371 / CIP 107618 / JCM 11309 / KCTC 3954 / HTE831).